The chain runs to 413 residues: Bestrophin homolog 13 (413 aa).

Helical transmembrane passes span 29–49 (LIYL…IDLI), 72–92 (SYTR…NVVA), 236–256 (LVYT…TLFG), and 272–292 (LVVP…FKVG).

Belongs to the anion channel-forming bestrophin (TC 1.A.46) family. Calcium-sensitive chloride channel subfamily. In terms of assembly, forms oligomers.

It localises to the cell membrane. Functionally, forms chloride channels. This is Bestrophin homolog 13 (best-13) from Caenorhabditis elegans.